The primary structure comprises 524 residues: Translation initiation factor eIF2B subunit delta (524 aa).

Residues 1–173 (MATAAVAVRE…ERQQVPTRKD (173 aa)) form a disordered region. An N-acetylalanine modification is found at alanine 2. Serine 12 carries the post-translational modification Phosphoserine. A compositionally biased stretch (basic and acidic residues) spans 26-40 (AEGREMTQEEKLQLR). The span at 41-51 (KEKKQQKKKRK) shows a compositional bias: basic residues. Threonine 86 carries the phosphothreonine modification. 2 stretches are compositionally biased toward basic and acidic residues: residues 87–121 (AKEK…RKGD) and 161–173 (KKPE…TRKD). A may bind the chemical integrated stress response (ISR) inhibitor ISRIB region spans residues 171–180 (RKDYGSKVSL).

The protein belongs to the eIF-2B alpha/beta/delta subunits family. Component of the translation initiation factor 2B (eIF2B) complex which is a heterodecamer of two sets of five different subunits: alpha, beta, gamma, delta and epsilon. Subunits alpha, beta and delta comprise a regulatory subcomplex and subunits epsilon and gamma comprise a catalytic subcomplex. Within the complex, the hexameric regulatory complex resides at the center, with the two heterodimeric catalytic subcomplexes bound on opposite sides.

The protein localises to the cytoplasm. It is found in the cytosol. With respect to regulation, activated by the chemical integrated stress response (ISR) inhibitor ISRIB which stimulates guanine nucleotide exchange factor activity for both phosphorylated and unphosphorylated eIF2. Functionally, acts as a component of the translation initiation factor 2B (eIF2B) complex, which catalyzes the exchange of GDP for GTP on eukaryotic initiation factor 2 (eIF2) gamma subunit. Its guanine nucleotide exchange factor activity is repressed when bound to eIF2 complex phosphorylated on the alpha subunit, thereby limiting the amount of methionyl-initiator methionine tRNA available to the ribosome and consequently global translation is repressed. This Bos taurus (Bovine) protein is Translation initiation factor eIF2B subunit delta (EIF2B4).